We begin with the raw amino-acid sequence, 305 residues long: Insulin-like peptide (305 aa).

The N-terminal stretch at 1–22 is a signal peptide; that stretch reads MNLSSVYVLASLAVVCLLVKET. 3 disulfide bridges follow: cysteine 28-cysteine 87, cysteine 40-cysteine 100, and cysteine 86-cysteine 91. A propeptide spans 52–76 (connecting peptide); the sequence is SVSKRAIDFISEQQAKDYMGAMPHI. A d region spans residues 102–114; sequence PYSTAPATATPVR. A propeptide spans 102 to 305 (d/E peptide); sequence PYSTAPATAT…RDSYHLTELR (204 aa). Positions 107 to 118 are enriched in low complexity; the sequence is PATATPVRTTEP. 2 disordered regions span residues 107-130 and 236-305; these read PATA…PLDG and HNQT…TELR. An e region spans residues 115-305; that stretch reads TTEPQPEEAE…RDSYHLTELR (191 aa). The span at 119-128 shows a compositional bias: acidic residues; it reads QPEEAEDDPL. Basic and acidic residues-rich tracts occupy residues 236 to 245 and 291 to 305; these read HNQTDKKEPT and RRIE…TELR.

The protein belongs to the insulin family.

The protein resides in the secreted. The sequence is that of Insulin-like peptide (ILP) from Branchiostoma californiense (California lancelet).